A 513-amino-acid chain; its full sequence is ATP synthase subunit alpha (513 aa).

Glycine 169–threonine 176 contributes to the ATP binding site.

This sequence belongs to the ATPase alpha/beta chains family. As to quaternary structure, F-type ATPases have 2 components, CF(1) - the catalytic core - and CF(0) - the membrane proton channel. CF(1) has five subunits: alpha(3), beta(3), gamma(1), delta(1), epsilon(1). CF(0) has three main subunits: a(1), b(2) and c(9-12). The alpha and beta chains form an alternating ring which encloses part of the gamma chain. CF(1) is attached to CF(0) by a central stalk formed by the gamma and epsilon chains, while a peripheral stalk is formed by the delta and b chains.

Its subcellular location is the cell inner membrane. The enzyme catalyses ATP + H2O + 4 H(+)(in) = ADP + phosphate + 5 H(+)(out). In terms of biological role, produces ATP from ADP in the presence of a proton gradient across the membrane. The alpha chain is a regulatory subunit. In Tolumonas auensis (strain DSM 9187 / NBRC 110442 / TA 4), this protein is ATP synthase subunit alpha.